We begin with the raw amino-acid sequence, 155 residues long: MGWENAPSHICRGGDLRGLAFCCPPIKYCPIHKALAVLKMSPEEFIRIKEEFGKRTKLGLGENTCFGSLVWCCKITKPCPYRDYELAKNNISPDEYMELKKQLAEEIIRNSQFFKEAVEVFVKKGIPKDIAEKCILETGDLKKAYEMAIKMIDKD.

This is an uncharacterized protein from Methanocaldococcus jannaschii (strain ATCC 43067 / DSM 2661 / JAL-1 / JCM 10045 / NBRC 100440) (Methanococcus jannaschii).